Reading from the N-terminus, the 283-residue chain is Pantothenate synthetase (283 aa).

30-37 (MGYLHEGH) contributes to the ATP binding site. Catalysis depends on His-37, which acts as the Proton donor. Gln-61 provides a ligand contact to (R)-pantoate. Gln-61 is a beta-alanine binding site. ATP is bound at residue 147–150 (GRKD). A (R)-pantoate-binding site is contributed by Gln-153. ATP is bound by residues Val-176 and 184 to 187 (MSSR).

The protein belongs to the pantothenate synthetase family. In terms of assembly, homodimer.

It localises to the cytoplasm. It catalyses the reaction (R)-pantoate + beta-alanine + ATP = (R)-pantothenate + AMP + diphosphate + H(+). The protein operates within cofactor biosynthesis; (R)-pantothenate biosynthesis; (R)-pantothenate from (R)-pantoate and beta-alanine: step 1/1. Catalyzes the condensation of pantoate with beta-alanine in an ATP-dependent reaction via a pantoyl-adenylate intermediate. This is Pantothenate synthetase from Syntrophotalea carbinolica (strain DSM 2380 / NBRC 103641 / GraBd1) (Pelobacter carbinolicus).